Reading from the N-terminus, the 292-residue chain is MHRELKRVFIVTKQAHAGAAALAADMQAWFAARGIEAATEENDTASALPDFARSASCIMVLGGDGTMLSVSRRAVGLDVPLLGVNLGKVGFLAEVSAAGWQQAFTRLAENGLTCSERLALHFAVSREGRCVFEGTAVNDVVLHRGVLARVINLGLGVDGEWLGDLRADGLIVSTPTGATGYAVSAGGPLVHPDMSVYAITPICPFLNNFHPMVLAGSMRFEIRILEGPQEVYVTQDGQECFALQAGDLVTVTQASRGLLFVAVEGSTYFTRLRAKGFVRDPRGRGRAVPASS.

The active-site Proton acceptor is Asp64. NAD(+) contacts are provided by residues 64-65, 138-139, Arg149, Arg166, Asp168, 179-184, and Gln238; these read DG, ND, and TGYAVS.

The protein belongs to the NAD kinase family. A divalent metal cation serves as cofactor.

Its subcellular location is the cytoplasm. It carries out the reaction NAD(+) + ATP = ADP + NADP(+) + H(+). Involved in the regulation of the intracellular balance of NAD and NADP, and is a key enzyme in the biosynthesis of NADP. Catalyzes specifically the phosphorylation on 2'-hydroxyl of the adenosine moiety of NAD to yield NADP. The chain is NAD kinase from Oleidesulfovibrio alaskensis (strain ATCC BAA-1058 / DSM 17464 / G20) (Desulfovibrio alaskensis).